A 58-amino-acid chain; its full sequence is Small ribosomal subunit protein bS21 (58 aa).

It belongs to the bacterial ribosomal protein bS21 family.

In Picosynechococcus sp. (strain ATCC 27264 / PCC 7002 / PR-6) (Agmenellum quadruplicatum), this protein is Small ribosomal subunit protein bS21.